A 243-amino-acid polypeptide reads, in one-letter code: Pyridoxine 5'-phosphate synthase (243 aa).

N9 serves as a coordination point for 3-amino-2-oxopropyl phosphate. Residue 11 to 12 (DH) coordinates 1-deoxy-D-xylulose 5-phosphate. R20 serves as a coordination point for 3-amino-2-oxopropyl phosphate. H45 acts as the Proton acceptor in catalysis. Positions 47 and 52 each coordinate 1-deoxy-D-xylulose 5-phosphate. E72 serves as the catalytic Proton acceptor. A 1-deoxy-D-xylulose 5-phosphate-binding site is contributed by T102. H193 acts as the Proton donor in catalysis. Residues G194 and 215–216 (GH) each bind 3-amino-2-oxopropyl phosphate.

This sequence belongs to the PNP synthase family. In terms of assembly, homooctamer; tetramer of dimers.

The protein localises to the cytoplasm. It carries out the reaction 3-amino-2-oxopropyl phosphate + 1-deoxy-D-xylulose 5-phosphate = pyridoxine 5'-phosphate + phosphate + 2 H2O + H(+). Its pathway is cofactor biosynthesis; pyridoxine 5'-phosphate biosynthesis; pyridoxine 5'-phosphate from D-erythrose 4-phosphate: step 5/5. Catalyzes the complicated ring closure reaction between the two acyclic compounds 1-deoxy-D-xylulose-5-phosphate (DXP) and 3-amino-2-oxopropyl phosphate (1-amino-acetone-3-phosphate or AAP) to form pyridoxine 5'-phosphate (PNP) and inorganic phosphate. The protein is Pyridoxine 5'-phosphate synthase of Salmonella paratyphi A (strain ATCC 9150 / SARB42).